We begin with the raw amino-acid sequence, 202 residues long: Imidazoleglycerol-phosphate dehydratase (202 aa).

It belongs to the imidazoleglycerol-phosphate dehydratase family.

It is found in the cytoplasm. The enzyme catalyses D-erythro-1-(imidazol-4-yl)glycerol 3-phosphate = 3-(imidazol-4-yl)-2-oxopropyl phosphate + H2O. It functions in the pathway amino-acid biosynthesis; L-histidine biosynthesis; L-histidine from 5-phospho-alpha-D-ribose 1-diphosphate: step 6/9. The protein is Imidazoleglycerol-phosphate dehydratase of Rhizobium etli (strain ATCC 51251 / DSM 11541 / JCM 21823 / NBRC 15573 / CFN 42).